The primary structure comprises 261 residues: Polyamine aminopropyltransferase (261 aa).

The 219-residue stretch at Met1 to Ser219 folds into the PABS domain. Residues Asp96 and Asp124–Gly125 each bind S-methyl-5'-thioadenosine. Asp142 serves as the catalytic Proton acceptor.

It belongs to the spermidine/spermine synthase family. Homodimer or homotetramer.

The protein localises to the cytoplasm. The catalysed reaction is S-adenosyl 3-(methylsulfanyl)propylamine + putrescine = S-methyl-5'-thioadenosine + spermidine + H(+). It participates in amine and polyamine biosynthesis; spermidine biosynthesis; spermidine from putrescine: step 1/1. Catalyzes the irreversible transfer of a propylamine group from the amino donor S-adenosylmethioninamine (decarboxy-AdoMet) to putrescine (1,4-diaminobutane) to yield spermidine. The sequence is that of Polyamine aminopropyltransferase from Chromobacterium violaceum (strain ATCC 12472 / DSM 30191 / JCM 1249 / CCUG 213 / NBRC 12614 / NCIMB 9131 / NCTC 9757 / MK).